Here is a 118-residue protein sequence, read N- to C-terminus: Phosphoribosyl-AMP cyclohydrolase (118 aa).

Residue aspartate 87 participates in Mg(2+) binding. Cysteine 88 is a binding site for Zn(2+). The Mg(2+) site is built by aspartate 89 and aspartate 91. Zn(2+)-binding residues include cysteine 104 and cysteine 111.

The protein belongs to the PRA-CH family. As to quaternary structure, homodimer. Mg(2+) serves as cofactor. Requires Zn(2+) as cofactor.

The protein localises to the cytoplasm. It carries out the reaction 1-(5-phospho-beta-D-ribosyl)-5'-AMP + H2O = 1-(5-phospho-beta-D-ribosyl)-5-[(5-phospho-beta-D-ribosylamino)methylideneamino]imidazole-4-carboxamide. The protein operates within amino-acid biosynthesis; L-histidine biosynthesis; L-histidine from 5-phospho-alpha-D-ribose 1-diphosphate: step 3/9. Its function is as follows. Catalyzes the hydrolysis of the adenine ring of phosphoribosyl-AMP. This chain is Phosphoribosyl-AMP cyclohydrolase, found in Corynebacterium glutamicum (strain ATCC 13032 / DSM 20300 / JCM 1318 / BCRC 11384 / CCUG 27702 / LMG 3730 / NBRC 12168 / NCIMB 10025 / NRRL B-2784 / 534).